We begin with the raw amino-acid sequence, 454 residues long: Bifunctional protein GlmU (454 aa).

Residues 1-226 are pyrophosphorylase; the sequence is MSLDIVILAA…AMEVQGANDR (226 aa). UDP-N-acetyl-alpha-D-glucosamine-binding positions include 8–11, Lys-22, Gln-73, 78–79, 99–101, Gly-136, Glu-151, Asn-166, and Asn-224; these read LAAG, GT, and YGD. Asp-101 lines the Mg(2+) pocket. Mg(2+) is bound at residue Asn-224. Residues 227-247 form a linker region; it reads LQLAQLERHYQSRVARRLMAQ. The segment at 248-454 is N-acetyltransferase; that stretch reads GVTLRDPARF…GWQRPTKQKK (207 aa). 2 residues coordinate UDP-N-acetyl-alpha-D-glucosamine: Arg-330 and Lys-348. His-360 acts as the Proton acceptor in catalysis. Residues Tyr-363 and Asn-374 each coordinate UDP-N-acetyl-alpha-D-glucosamine. Residues Ala-377, 383-384, Ser-402, Ala-420, and Arg-437 each bind acetyl-CoA; that span reads NY.

This sequence in the N-terminal section; belongs to the N-acetylglucosamine-1-phosphate uridyltransferase family. It in the C-terminal section; belongs to the transferase hexapeptide repeat family. Homotrimer. The cofactor is Mg(2+).

It is found in the cytoplasm. The enzyme catalyses alpha-D-glucosamine 1-phosphate + acetyl-CoA = N-acetyl-alpha-D-glucosamine 1-phosphate + CoA + H(+). It catalyses the reaction N-acetyl-alpha-D-glucosamine 1-phosphate + UTP + H(+) = UDP-N-acetyl-alpha-D-glucosamine + diphosphate. It participates in nucleotide-sugar biosynthesis; UDP-N-acetyl-alpha-D-glucosamine biosynthesis; N-acetyl-alpha-D-glucosamine 1-phosphate from alpha-D-glucosamine 6-phosphate (route II): step 2/2. It functions in the pathway nucleotide-sugar biosynthesis; UDP-N-acetyl-alpha-D-glucosamine biosynthesis; UDP-N-acetyl-alpha-D-glucosamine from N-acetyl-alpha-D-glucosamine 1-phosphate: step 1/1. The protein operates within bacterial outer membrane biogenesis; LPS lipid A biosynthesis. Functionally, catalyzes the last two sequential reactions in the de novo biosynthetic pathway for UDP-N-acetylglucosamine (UDP-GlcNAc). The C-terminal domain catalyzes the transfer of acetyl group from acetyl coenzyme A to glucosamine-1-phosphate (GlcN-1-P) to produce N-acetylglucosamine-1-phosphate (GlcNAc-1-P), which is converted into UDP-GlcNAc by the transfer of uridine 5-monophosphate (from uridine 5-triphosphate), a reaction catalyzed by the N-terminal domain. This chain is Bifunctional protein GlmU, found in Azotobacter vinelandii (strain DJ / ATCC BAA-1303).